A 101-amino-acid chain; its full sequence is Small ribosomal subunit protein bS18c (101 aa).

It belongs to the bacterial ribosomal protein bS18 family. Part of the 30S ribosomal subunit.

The protein localises to the plastid. Its subcellular location is the chloroplast. This chain is Small ribosomal subunit protein bS18c (rps18), found in Arabidopsis thaliana (Mouse-ear cress).